The following is a 355-amino-acid chain: UDP-N-acetylglucosamine--N-acetylmuramyl-(pentapeptide) pyrophosphoryl-undecaprenol N-acetylglucosamine transferase (355 aa).

UDP-N-acetyl-alpha-D-glucosamine-binding positions include 15 to 17, N127, R163, S191, I244, 263 to 268, and Q288; these read TGG and ALTVSE.

It belongs to the glycosyltransferase 28 family. MurG subfamily.

The protein resides in the cell inner membrane. The enzyme catalyses di-trans,octa-cis-undecaprenyl diphospho-N-acetyl-alpha-D-muramoyl-L-alanyl-D-glutamyl-meso-2,6-diaminopimeloyl-D-alanyl-D-alanine + UDP-N-acetyl-alpha-D-glucosamine = di-trans,octa-cis-undecaprenyl diphospho-[N-acetyl-alpha-D-glucosaminyl-(1-&gt;4)]-N-acetyl-alpha-D-muramoyl-L-alanyl-D-glutamyl-meso-2,6-diaminopimeloyl-D-alanyl-D-alanine + UDP + H(+). It participates in cell wall biogenesis; peptidoglycan biosynthesis. In terms of biological role, cell wall formation. Catalyzes the transfer of a GlcNAc subunit on undecaprenyl-pyrophosphoryl-MurNAc-pentapeptide (lipid intermediate I) to form undecaprenyl-pyrophosphoryl-MurNAc-(pentapeptide)GlcNAc (lipid intermediate II). The sequence is that of UDP-N-acetylglucosamine--N-acetylmuramyl-(pentapeptide) pyrophosphoryl-undecaprenol N-acetylglucosamine transferase from Shigella flexneri serotype 5b (strain 8401).